Here is a 647-residue protein sequence, read N- to C-terminus: Threonine--tRNA ligase (647 aa).

A TGS domain is found at 1–61 (MINITFPDGA…TEDGSIEIVT (61 aa)). Residues 242–540 (DHRKLGKELD…LIENYKGAFP (299 aa)) are catalytic. Residues Cys336, His387, and His517 each contribute to the Zn(2+) site.

Belongs to the class-II aminoacyl-tRNA synthetase family. Homodimer. Requires Zn(2+) as cofactor.

It localises to the cytoplasm. The enzyme catalyses tRNA(Thr) + L-threonine + ATP = L-threonyl-tRNA(Thr) + AMP + diphosphate + H(+). Functionally, catalyzes the attachment of threonine to tRNA(Thr) in a two-step reaction: L-threonine is first activated by ATP to form Thr-AMP and then transferred to the acceptor end of tRNA(Thr). Also edits incorrectly charged L-seryl-tRNA(Thr). This is Threonine--tRNA ligase from Streptococcus pneumoniae (strain JJA).